A 371-amino-acid polypeptide reads, in one-letter code: SufE-like protein 1, chloroplastic/mitochondrial (371 aa).

Residues 1 to 66 (MAAAMSSSCC…ISTGIVPPPS (66 aa)) constitute a chloroplast and mitochondrion transit peptide. Cys-131 serves as the catalytic Cysteine persulfide intermediate. Cys-131 is modified (S-glutathionyl cysteine). The interval 218–249 (VKGEEDSSSGESSESSFVSIPETKDEANVPEV) is disordered.

It belongs to the SufE family. In terms of assembly, heterotetramer with NFS2. Interacts with NFS2 and NIFS1. Interacts in vitro with GRXS14, GRXS15, GRXS16 and GRXS17, but not with GRXC5. Interacts in vivo only with GRXS14 and GRXS16. Glutathionylated. Glutathionylation strongly reduces the stimulation of NFS2 activity. Expressed in roots, leaves, stems and flowers.

It is found in the plastid. The protein resides in the chloroplast stroma. Its subcellular location is the mitochondrion. The protein operates within cofactor biosynthesis; iron-sulfur cluster biosynthesis. Functionally, participates in cysteine desulfurization mediated by NFS2 in chloroplast and NIFS1 in mitochondrion. Activates the cysteine desulfurase activity of NFS2. Cysteine desulfurization mobilizes sulfur from L-cysteine to yield L-alanine and supplies the inorganic sulfur for iron-sulfur (Fe-S) cluster formation. Glutaredoxins regulate SUFE1 activity by inducing its reduction and deglutathionylation. The sequence is that of SufE-like protein 1, chloroplastic/mitochondrial from Arabidopsis thaliana (Mouse-ear cress).